Here is an 81-residue protein sequence, read N- to C-terminus: Defensin-like protein 313 (81 aa).

An N-terminal signal peptide occupies residues Met1–Ala32. 3 cysteine pairs are disulfide-bonded: Cys34-Cys63, Cys45-Cys74, and Cys49-Cys76.

The protein belongs to the DEFL family.

The protein localises to the secreted. The polypeptide is Defensin-like protein 313 (Arabidopsis thaliana (Mouse-ear cress)).